We begin with the raw amino-acid sequence, 514 residues long: 2,3-bisphosphoglycerate-independent phosphoglycerate mutase (514 aa).

Residues Asp-14 and Ser-64 each contribute to the Mn(2+) site. The Phosphoserine intermediate role is filled by Ser-64. Residues His-125, 155 to 156 (RD), Arg-187, Arg-193, 263 to 266 (RADR), and Lys-336 each bind substrate. 5 residues coordinate Mn(2+): Asp-403, His-407, Asp-444, His-445, and His-463.

This sequence belongs to the BPG-independent phosphoglycerate mutase family. Monomer. Mn(2+) is required as a cofactor.

The catalysed reaction is (2R)-2-phosphoglycerate = (2R)-3-phosphoglycerate. It functions in the pathway carbohydrate degradation; glycolysis; pyruvate from D-glyceraldehyde 3-phosphate: step 3/5. Functionally, catalyzes the interconversion of 2-phosphoglycerate and 3-phosphoglycerate. This is 2,3-bisphosphoglycerate-independent phosphoglycerate mutase from Shigella dysenteriae serotype 1 (strain Sd197).